Reading from the N-terminus, the 78-residue chain is Large ribosomal subunit protein bL28 (78 aa).

The segment at 1–20 (MSRVCQVTGKGPVTGNNISH) is disordered.

The protein belongs to the bacterial ribosomal protein bL28 family.

The sequence is that of Large ribosomal subunit protein bL28 from Pseudomonas putida (strain ATCC 700007 / DSM 6899 / JCM 31910 / BCRC 17059 / LMG 24140 / F1).